The sequence spans 244 residues: tRNA (guanine-N(1)-)-methyltransferase (244 aa).

Residues Gly113 and 133 to 138 each bind S-adenosyl-L-methionine; that span reads IGDFVL.

It belongs to the RNA methyltransferase TrmD family. Homodimer.

Its subcellular location is the cytoplasm. The catalysed reaction is guanosine(37) in tRNA + S-adenosyl-L-methionine = N(1)-methylguanosine(37) in tRNA + S-adenosyl-L-homocysteine + H(+). In terms of biological role, specifically methylates guanosine-37 in various tRNAs. The sequence is that of tRNA (guanine-N(1)-)-methyltransferase from Bacillus pumilus (strain SAFR-032).